Consider the following 114-residue polypeptide: Astacin-like metalloprotease toxin 4 (114 aa).

The 114-residue stretch at 1 to 114 (RETNENDYVD…GLLCLFKGSV (114 aa)) folds into the Peptidase M12A domain. A disulfide bridge connects residues C17 and C38. H46 is a Zn(2+) binding site. The active site involves E47. Residues H50 and H56 each coordinate Zn(2+). A glycan (N-linked (GlcNAc...) asparagine) is linked at N88.

As to quaternary structure, monomer. Zn(2+) serves as cofactor. Expressed by the venom gland.

It localises to the secreted. Inhibited by 1,10-phenanthroline. In terms of biological role, zinc metalloprotease. Provoques deadhesion of endothelial cells from cell cultures, and also degradation of fibronectin, fibrinogen and gelatin in vitro. Its role in the venom is not fully understood but it might act as a spreading factor that facilitates diffusion of other venom toxins. Alternatively, it might be involved in the proteolytic processing of other venom toxins or it might play a role in extra-oral digestion of prey. This Loxosceles laeta (South American recluse spider) protein is Astacin-like metalloprotease toxin 4.